We begin with the raw amino-acid sequence, 196 residues long: MPIGVPKVPFRNPGEDDISWIDVYNRLYRERLLFLGQEVESEISNQLIGLMIYLSIEDENKDLYFFINSPGGWVLPGIAIYDTMQFVPPEVHTICLGLAASMGSFILVGGTITKRLAFPHARVMIHQPAAAFYEAQAGEFVMEAEELLKLREIITKVYVQRTGKPLWVVSEDLERDVFMSATEAQTHGIVDLVAVQ.

The active-site Nucleophile is serine 101. Histidine 126 is a catalytic residue.

This sequence belongs to the peptidase S14 family. Component of the chloroplastic Clp protease core complex.

The protein resides in the plastid. Its subcellular location is the chloroplast stroma. The catalysed reaction is Hydrolysis of proteins to small peptides in the presence of ATP and magnesium. alpha-casein is the usual test substrate. In the absence of ATP, only oligopeptides shorter than five residues are hydrolyzed (such as succinyl-Leu-Tyr-|-NHMec, and Leu-Tyr-Leu-|-Tyr-Trp, in which cleavage of the -Tyr-|-Leu- and -Tyr-|-Trp bonds also occurs).. Cleaves peptides in various proteins in a process that requires ATP hydrolysis. Has a chymotrypsin-like activity. Plays a major role in the degradation of misfolded proteins. The sequence is that of ATP-dependent Clp protease proteolytic subunit from Vitis vinifera (Grape).